The chain runs to 222 residues: Uclacyanin-3 (222 aa).

An N-terminal signal peptide occupies residues M1–A21. The 99-residue stretch at A22–A120 folds into the Phytocyanin domain. Residues H61, C102, H107, and M112 each contribute to the Cu cation site. An intrachain disulfide couples C74 to C108. The interval A121 to N198 is disordered. 2 stretches are compositionally biased toward pro residues: residues P125–S172 and T185–L195. N198 carries GPI-anchor amidated asparagine lipidation. Positions A199–T222 are cleaved as a propeptide — removed in mature form.

It is found in the cell membrane. In terms of biological role, probably acts as an electron carrier involved in oxygen activation and/or lignin formation. The chain is Uclacyanin-3 (UCC3) from Arabidopsis thaliana (Mouse-ear cress).